The following is a 149-amino-acid chain: Probable flagellum biosynthesis repressor protein FlbT (149 aa).

This sequence belongs to the FlbT family.

In terms of biological role, has a post-transcriptional repressor function in flagellum biogenesis. Associates with the 5'-UTR of fljK mRNA and promotes its degradation. The chain is Probable flagellum biosynthesis repressor protein FlbT from Sinorhizobium medicae (strain WSM419) (Ensifer medicae).